The sequence spans 448 residues: tRNA-2-methylthio-N(6)-dimethylallyladenosine synthase (448 aa).

An MTTase N-terminal domain is found at 2–120; sequence KKYRIIVFGC…LPELIGKVIE (119 aa). [4Fe-4S] cluster-binding residues include C11, C47, C81, C158, C162, and C165. Residues 144–374 enclose the Radical SAM core domain; that stretch reads RKEGVRAWVT…IKLQNKISLE (231 aa). A TRAM domain is found at 377–440; the sequence is EEEVGQTQEV…LAHLTGILSY (64 aa).

The protein belongs to the methylthiotransferase family. MiaB subfamily. Monomer. [4Fe-4S] cluster is required as a cofactor.

It is found in the cytoplasm. The enzyme catalyses N(6)-dimethylallyladenosine(37) in tRNA + (sulfur carrier)-SH + AH2 + 2 S-adenosyl-L-methionine = 2-methylsulfanyl-N(6)-dimethylallyladenosine(37) in tRNA + (sulfur carrier)-H + 5'-deoxyadenosine + L-methionine + A + S-adenosyl-L-homocysteine + 2 H(+). In terms of biological role, catalyzes the methylthiolation of N6-(dimethylallyl)adenosine (i(6)A), leading to the formation of 2-methylthio-N6-(dimethylallyl)adenosine (ms(2)i(6)A) at position 37 in tRNAs that read codons beginning with uridine. The protein is tRNA-2-methylthio-N(6)-dimethylallyladenosine synthase of Pelotomaculum thermopropionicum (strain DSM 13744 / JCM 10971 / SI).